We begin with the raw amino-acid sequence, 570 residues long: Interleukin-1 receptor accessory protein (570 aa).

The first 20 residues, 1-20 (MTLLWCVVSLYFYGILQSDA), serve as a signal peptide directing secretion. Ig-like C2-type domains follow at residues 21 to 128 (SERC…VAFP), 136 to 226 (SCFN…FHLT), and 242 to 350 (PPVI…VKQK). At 21–367 (SERCDDWGLD…VELACGFGAT (347 aa)) the chain is on the extracellular side. 5 disulfides stabilise this stretch: C24–C122, C47–C114, C137–C181, C160–C212, and C266–C332. A glycan (N-linked (GlcNAc...) asparagine) is linked at N57. The segment at 69–85 (IWYWTRQDRDLEEPINF) is essential for interaction with PTPRD. 3 N-linked (GlcNAc...) asparagine glycosylation sites follow: N107, N111, and N118. 3 N-linked (GlcNAc...) asparagine glycosylation sites follow: N196, N209, and N299. Residues 368 to 388 (VLLVVILIVVYHVYWLEMVLF) traverse the membrane as a helical segment. The Cytoplasmic segment spans residues 389–570 (YRAHFGTDET…GLSYSSLKNV (182 aa)). The TIR domain maps to 403–546 (KEYDIYVSYA…RFWKQLQVAM (144 aa)). E482 is an active-site residue. The interval 549 to 570 (KKSPRRSSSDEQGLSYSSLKNV) is disordered. The residue at position 557 (S557) is a Phosphoserine. Polar residues predominate over residues 558–570 (DEQGLSYSSLKNV).

Belongs to the interleukin-1 receptor family. In terms of assembly, the interleukin-36 receptor complex is a heterodimer of IL1RL2 and IL1RAP; the association is inhibited by IL36RN. The interleukin-1 receptor complex is a heterodimer of IL1R1 and IL1RAP. Associates with IL1R2 to form a non-signaling interleukin-1 receptor complex. Interacts with IL-33-bound IL1RL1 to form the minimal interleukin-33 signaling complex with a 1:1:1 stoichiometry. Interacts with KIT (independently of stimulation with KITLG/SCF). A mast cell-specific KITLG/SCF-induced interleukin-33 signaling complex contains IL1RL1, IL1RAP, KIT and MYD88. Interacts (via the first immunoglobilin domain) with PTPRD (via the third immunoglobilin domain); induces pre- and postsynaptic differentiation of neurons.

It is found in the cell membrane. It localises to the secreted. The catalysed reaction is NAD(+) + H2O = ADP-D-ribose + nicotinamide + H(+). In terms of biological role, coreceptor for IL1RL2 in the IL-36 signaling system. Coreceptor with IL1R1 in the IL-1 signaling system. Associates with IL1R1 bound to IL1B to form the high affinity interleukin-1 receptor complex which mediates interleukin-1-dependent activation of NF-kappa-B and other pathways. Signaling involves the recruitment of adapter molecules such as TOLLIP, MYD88, and IRAK1 or IRAK2 via the respective TIR domains of the receptor/coreceptor subunits. Recruits TOLLIP to the signaling complex. Does not bind to interleukin-1 alone; binding of IL1RN to IL1R1, prevents its association with IL1R1 to form a signaling complex. The cellular response is modulated through a non-signaling association with the membrane IL1R2 decoy receptor. Coreceptor for IL1RL1 in the IL-33 signaling system. Can bidirectionally induce pre- and postsynaptic differentiation of neurons by trans-synaptically binding to PTPRD. May play a role in IL1B-mediated costimulation of IFNG production from T-helper 1 (Th1) cells. Functionally, associates with secreted ligand-bound IL1R2 and increases the affinity of secreted IL1R2 for IL1B; this complex formation may be the dominant mechanism for neutralization of IL1B by secreted/soluble receptors. Enhances the ability of secreted IL1R1 to inhibit IL-33 signaling. The chain is Interleukin-1 receptor accessory protein (IL1RAP) from Macaca mulatta (Rhesus macaque).